Reading from the N-terminus, the 213-residue chain is Peptidyl-tRNA hydrolase (213 aa).

Y26 contributes to the tRNA binding site. Catalysis depends on H31, which acts as the Proton acceptor. Residues Y78, N80, and N126 each coordinate tRNA.

The protein belongs to the PTH family. Monomer.

The protein resides in the cytoplasm. It catalyses the reaction an N-acyl-L-alpha-aminoacyl-tRNA + H2O = an N-acyl-L-amino acid + a tRNA + H(+). Its function is as follows. Hydrolyzes ribosome-free peptidyl-tRNAs (with 1 or more amino acids incorporated), which drop off the ribosome during protein synthesis, or as a result of ribosome stalling. Functionally, catalyzes the release of premature peptidyl moieties from peptidyl-tRNA molecules trapped in stalled 50S ribosomal subunits, and thus maintains levels of free tRNAs and 50S ribosomes. The chain is Peptidyl-tRNA hydrolase from Nostoc punctiforme (strain ATCC 29133 / PCC 73102).